A 420-amino-acid polypeptide reads, in one-letter code: Glucose-1-phosphate adenylyltransferase (420 aa).

Alpha-D-glucose 1-phosphate contacts are provided by residues tyrosine 107, glycine 172, 187-188, and serine 205; that span reads EK.

This sequence belongs to the bacterial/plant glucose-1-phosphate adenylyltransferase family. As to quaternary structure, homotetramer.

It carries out the reaction alpha-D-glucose 1-phosphate + ATP + H(+) = ADP-alpha-D-glucose + diphosphate. It functions in the pathway glycan biosynthesis; glycogen biosynthesis. In terms of biological role, involved in the biosynthesis of ADP-glucose, a building block required for the elongation reactions to produce glycogen. Catalyzes the reaction between ATP and alpha-D-glucose 1-phosphate (G1P) to produce pyrophosphate and ADP-Glc. In Rhodopseudomonas palustris (strain BisB18), this protein is Glucose-1-phosphate adenylyltransferase.